A 382-amino-acid chain; its full sequence is Mannitol-1-phosphate 5-dehydrogenase (382 aa).

Position 3-14 (3-14 (VLHFGAGNIGRG)) interacts with NAD(+).

The protein belongs to the mannitol dehydrogenase family.

The catalysed reaction is D-mannitol 1-phosphate + NAD(+) = beta-D-fructose 6-phosphate + NADH + H(+). This chain is Mannitol-1-phosphate 5-dehydrogenase, found in Sodalis glossinidius (strain morsitans).